We begin with the raw amino-acid sequence, 600 residues long: Alpha pinene synthase, chloroplastic (600 aa).

Positions 1–27 (MSSISMHAGPLNISAANNHHPSWDRRV) are disordered. Residues 1 to 31 (MSSISMHAGPLNISAANNHHPSWDRRVSKPR) constitute a chloroplast transit peptide. Residues Asp-354, Asp-358, Asp-498, and Glu-506 each contribute to the Mg(2+) site. The short motif at 354–358 (DDVYD) is the DDXXD motif element.

The protein belongs to the terpene synthase family. Tpsa subfamily. The cofactor is Mg(2+). Mn(2+) is required as a cofactor. Expressed at low levels in leaves.

Its subcellular location is the plastid. The protein resides in the chloroplast. The enzyme catalyses (2E)-geranyl diphosphate = alpha-pinene + diphosphate. Its pathway is secondary metabolite biosynthesis; terpenoid biosynthesis. In terms of biological role, monoterpene synthase involved in the biosynthesis of volatile compounds widely used in aromatherapy and folk medicine, and present in culinary herbs. Mediates the conversion of (2E)-geranyl diphosphate (GPP) into alpha-pinene and, as minor compounds, into alpha-phellandrene, limonene and alpha-terpinolene. This chain is Alpha pinene synthase, chloroplastic, found in Lavandula viridis (Green lavender).